Reading from the N-terminus, the 273-residue chain is Light-independent protochlorophyllide reductase iron-sulfur ATP-binding protein (273 aa).

Residues 12-17 and K41 each bind ATP; that span reads GIGKST. Mg(2+) is bound at residue S16. The [4Fe-4S] cluster site is built by C97 and C131. 182-183 contributes to the ATP binding site; it reads NR.

The protein belongs to the NifH/BchL/ChlL family. Homodimer. Protochlorophyllide reductase is composed of three subunits; BchL, BchN and BchB. [4Fe-4S] cluster is required as a cofactor.

It carries out the reaction chlorophyllide a + oxidized 2[4Fe-4S]-[ferredoxin] + 2 ADP + 2 phosphate = protochlorophyllide a + reduced 2[4Fe-4S]-[ferredoxin] + 2 ATP + 2 H2O. It functions in the pathway porphyrin-containing compound metabolism; bacteriochlorophyll biosynthesis (light-independent). Component of the dark-operative protochlorophyllide reductase (DPOR) that uses Mg-ATP and reduced ferredoxin to reduce ring D of protochlorophyllide (Pchlide) to form chlorophyllide a (Chlide). This reaction is light-independent. The L component serves as a unique electron donor to the NB-component of the complex, and binds Mg-ATP. This Chloroflexus aurantiacus (strain ATCC 29364 / DSM 637 / Y-400-fl) protein is Light-independent protochlorophyllide reductase iron-sulfur ATP-binding protein.